The primary structure comprises 312 residues: Zinc transporter ZitB (312 aa).

5 consecutive transmembrane segments (helical) span residues 21–41 (LLFA…GGIL), 48–68 (LADA…LLAV), 90–110 (AAFV…WEAI), 123–143 (LMMV…WILH), and 164–184 (LLGS…GWTP).

This sequence belongs to the cation diffusion facilitator (CDF) transporter (TC 2.A.4) family. SLC30A subfamily.

Its subcellular location is the cell inner membrane. Involved in zinc efflux across the cytoplasmic membrane, thus reducing zinc accumulation in the cytoplasm and rendering bacteria more resistant to zinc. It may contribute to zinc homeostasis at low concentrations of zinc. This chain is Zinc transporter ZitB, found in Salmonella typhimurium (strain LT2 / SGSC1412 / ATCC 700720).